The chain runs to 256 residues: N-acetylglucosaminyldiphosphoundecaprenol N-acetyl-beta-D-mannosaminyltransferase (256 aa).

This sequence belongs to the glycosyltransferase 26 family. TagA/TarA subfamily.

It catalyses the reaction UDP-N-acetyl-alpha-D-mannosamine + N-acetyl-alpha-D-glucosaminyl-di-trans,octa-cis-undecaprenyl diphosphate = N-acetyl-beta-D-mannosaminyl-(1-&gt;4)-N-acetyl-alpha-D-glucosaminyl di-trans,octa-cis-undecaprenyl diphosphate + UDP + H(+). It participates in cell wall biogenesis; poly(glycerol phosphate) teichoic acid biosynthesis. Its function is as follows. Catalyzes the conversion of GlcNAc-PP-undecaprenol into ManNAc-GlcNAc-PP-undecaprenol, the first committed lipid intermediate in the de novo synthesis of teichoic acid. The chain is N-acetylglucosaminyldiphosphoundecaprenol N-acetyl-beta-D-mannosaminyltransferase from Bacillus subtilis (strain 168).